Consider the following 385-residue polypeptide: Cytochrome b (385 aa).

Residues 1–27 (MRLLKSHPLLKLVNSYLIDASQPSNIS) lie on the Mitochondrial matrix side of the membrane. Tyrosine 16 is a binding site for a ubiquinone. Residues 28-51 (YLWNFGSLLACCLIIQIVTGVTLA) traverse the membrane as a helical segment. Residues 52–74 (MHYSPNVLEAFNSIEHIMRDVNN) are Mitochondrial intermembrane-facing. Residues 75–102 (GWLVRYLHSNTASAFFFLVYLHIGRGMY) traverse the membrane as a helical segment. 2 residues coordinate heme b: histidine 82 and histidine 96. Over 103-110 (YGSYRAPR) the chain is Mitochondrial matrix. Residues 111 to 135 (TLVWAIGTVILILMMATAFLGYVLP) form a helical membrane-spanning segment. Residues 136-172 (YGQMSLWGATVITNLISAIPWIGQDIVEFIWGGFSVN) lie on the Mitochondrial intermembrane side of the membrane. Residues 173 to 205 (NATLNRFFALHFVLPFILAALVLMHLIALHDTA) traverse the membrane as a helical segment. Heme b is bound by residues histidine 183 and histidine 197. Histidine 202 contributes to the a ubiquinone binding site. Residues 206 to 224 (GSSNPLGVSGNYDRITFAP) are Mitochondrial matrix-facing. Residues 225 to 247 (YYLFKDLITIFIFIYVLSSFVFF) form a helical membrane-spanning segment. The Mitochondrial intermembrane portion of the chain corresponds to 248–288 (MPNVLGDSENYIMANPMQTPPAIVPEWYLLPFYAILRSIPN). The chain crosses the membrane as a helical span at residues 289–309 (KLLGVIAMFSAILAIMLLPIT). Residues 310-320 (DLGRSKGLQFR) are Mitochondrial matrix-facing. Residues 321–341 (PLSKFAFWAFVVNFLILMKLG) form a helical membrane-spanning segment. The Mitochondrial intermembrane segment spans residues 342–348 (ACHVESP). A helical membrane pass occupies residues 349-365 (FIELGQFSTIFYFSYFI). The Mitochondrial matrix portion of the chain corresponds to 366 to 385 (FIVPVLSLIENTLVDLNYLK).

It belongs to the cytochrome b family. In terms of assembly, component of the ubiquinol-cytochrome c oxidoreductase (cytochrome b-c1 complex, complex III, CIII), a multisubunit enzyme composed of 10 subunits. The complex is composed of 3 respiratory subunits cytochrome b (cob), cytochrome c1 (cyt-1) and Rieske protein (fes-1), 2 core protein subunits pep and ucr-1, and 5 low-molecular weight protein subunits qcr6, qcr7, qcr8, qcr9 and probably NCU16844/qcr10. The complex exists as an obligatory dimer and forms supercomplexes (SCs) in the inner mitochondrial membrane with NADH-ubiquinone oxidoreductase (complex I, CI) and cytochrome c oxidase (complex IV, CIV), resulting in different assemblies (supercomplexes SCI(1)III(2), SCIII(2)IV(1) and SCIII(2)IV(2) as well as higher order I(x)III(y)IV(z) megacomplexes). The cofactor is heme b.

The protein localises to the mitochondrion inner membrane. It carries out the reaction a quinol + 2 Fe(III)-[cytochrome c](out) = a quinone + 2 Fe(II)-[cytochrome c](out) + 2 H(+)(out). Component of the ubiquinol-cytochrome c oxidoreductase, a multisubunit transmembrane complex that is part of the mitochondrial electron transport chain which drives oxidative phosphorylation. The respiratory chain contains 3 multisubunit complexes succinate dehydrogenase (complex II, CII), ubiquinol-cytochrome c oxidoreductase (cytochrome b-c1 complex, complex III, CIII) and cytochrome c oxidase (complex IV, CIV), that cooperate to transfer electrons derived from NADH and succinate to molecular oxygen, creating an electrochemical gradient over the inner membrane that drives transmembrane transport and the ATP synthase. The cytochrome b-c1 complex catalyzes electron transfer from ubiquinol to cytochrome c, linking this redox reaction to translocation of protons across the mitochondrial inner membrane, with protons being carried across the membrane as hydrogens on the quinol. In the process called Q cycle, 2 protons are consumed from the matrix, 4 protons are released into the intermembrane space and 2 electrons are passed to cytochrome c. Cytochrome b is a catalytic core subunit containing 2 b-type hemes BL and BH topographically segregated in the quinone reduction (Qi) and quinol oxidation (Q0) sites on opposite sides of the membrane. This chain is Cytochrome b (cob), found in Neurospora crassa (strain ATCC 24698 / 74-OR23-1A / CBS 708.71 / DSM 1257 / FGSC 987).